We begin with the raw amino-acid sequence, 466 residues long: Argininosuccinate lyase (466 aa).

2-(N(omega)-L-arginino)succinate contacts are provided by Ser27, Asn114, and Thr159. The active-site Proton acceptor is His160. Ser281 functions as the Proton donor in the catalytic mechanism. Positions 289, 321, 326, and 329 each coordinate 2-(N(omega)-L-arginino)succinate.

The protein belongs to the lyase 1 family. Argininosuccinate lyase subfamily. As to quaternary structure, homotetramer. In terms of processing, the N-terminus is blocked. In terms of tissue distribution, eye lens.

The enzyme catalyses 2-(N(omega)-L-arginino)succinate = fumarate + L-arginine. It functions in the pathway amino-acid biosynthesis; L-arginine biosynthesis; L-arginine from L-ornithine and carbamoyl phosphate: step 3/3. Delta crystallin, the principal crystallin in embryonic lens, is found only in birds and reptiles. This protein also functions as an enzymatically active argininosuccinate lyase, but it has a low activity. This Columba livia (Rock dove) protein is Argininosuccinate lyase (ASL).